The following is a 103-amino-acid chain: Large ribosomal subunit protein uL24 (103 aa).

Belongs to the universal ribosomal protein uL24 family. In terms of assembly, part of the 50S ribosomal subunit.

Functionally, one of two assembly initiator proteins, it binds directly to the 5'-end of the 23S rRNA, where it nucleates assembly of the 50S subunit. Its function is as follows. One of the proteins that surrounds the polypeptide exit tunnel on the outside of the subunit. In Ruthia magnifica subsp. Calyptogena magnifica, this protein is Large ribosomal subunit protein uL24.